Reading from the N-terminus, the 343-residue chain is Cathepsin Q (343 aa).

A signal peptide spans 1–20 (MTPAVFLVILCLGVVPGASA). The propeptide at 21–124 (LDLSLDVQWQ…FPNSWNWRDA (104 aa)) is activation peptide. 2 cysteine pairs are disulfide-bonded: Cys146-Cys189 and Cys180-Cys222. Cys149 is a catalytic residue. Asn228 carries an N-linked (GlcNAc...) asparagine glycan. Cysteines 280 and 332 form a disulfide. His286 is a catalytic residue. An N-linked (GlcNAc...) asparagine glycan is attached at Asn298. Asn310 is an active-site residue.

The protein belongs to the peptidase C1 family. In terms of tissue distribution, highly expressed in placenta.

Its subcellular location is the lysosome. This is Cathepsin Q (Ctsq) from Rattus norvegicus (Rat).